The primary structure comprises 323 residues: Pyruvate dehydrogenase E1 component subunit beta (323 aa).

Thiamine diphosphate is bound at residue glutamate 60. The K(+) site is built by isoleucine 113, alanine 161, isoleucine 162, aspartate 164, and asparagine 166.

Heterodimer of an alpha and a beta chain. Thiamine diphosphate is required as a cofactor.

The protein resides in the plastid. It localises to the chloroplast. It carries out the reaction N(6)-[(R)-lipoyl]-L-lysyl-[protein] + pyruvate + H(+) = N(6)-[(R)-S(8)-acetyldihydrolipoyl]-L-lysyl-[protein] + CO2. Functionally, the pyruvate dehydrogenase complex catalyzes the overall conversion of pyruvate to acetyl-CoA and CO(2). It contains multiple copies of three enzymatic components: pyruvate dehydrogenase (E1), dihydrolipoamide acetyltransferase (E2) and lipoamide dehydrogenase (E3). This chain is Pyruvate dehydrogenase E1 component subunit beta (pdhB), found in Gracilaria tenuistipitata var. liui (Red alga).